Here is a 220-residue protein sequence, read N- to C-terminus: Claudin-6 (220 aa).

Topologically, residues methionine 1–glutamine 7 are cytoplasmic. A helical membrane pass occupies residues isoleucine 8 to proline 28. Topologically, residues methionine 29–arginine 81 are extracellular. The chain crosses the membrane as a helical span at residues alanine 82–alanine 102. The Cytoplasmic portion of the chain corresponds to lysine 103–arginine 116. A helical transmembrane segment spans residues leucine 117–cysteine 137. The Extracellular segment spans residues tryptophan 138 to leucine 160. A helical transmembrane segment spans residues glycine 161–leucine 181. The Cytoplasmic segment spans residues cysteine 182–valine 220. 4 positions are modified to phosphoserine: serine 201, serine 203, serine 208, and serine 212. The interactions with TJP1, TJP2 and TJP3 stretch occupies residues tyrosine 219 to valine 220.

Belongs to the claudin family. In terms of assembly, directly interacts with TJP1/ZO-1, TJP2/ZO-2 and TJP3/ZO-3. Interacts with CLDN1, CD81 and OCLN. In terms of tissue distribution, expressed in the liver, in peripheral blood mononuclear cells and hepatocarcinoma cell lines.

It localises to the cell junction. It is found in the tight junction. Its subcellular location is the cell membrane. Plays a major role in tight junction-specific obliteration of the intercellular space. In terms of biological role, (Microbial infection) Acts as a receptor for hepatitis C virus (HCV) entry into hepatic cells. In Homo sapiens (Human), this protein is Claudin-6 (CLDN6).